Consider the following 515-residue polypeptide: Germ cell-less protein-like 1 (515 aa).

The interval 1–35 (MGSLSSRVLRQPRPALAQQAQGARAGGSARRPDTG) is disordered. A compositionally biased stretch (low complexity) spans 11–29 (QPRPALAQQAQGARAGGSA). Residues 49 to 55 (SHKRKRS) carry the Nuclear localization signal motif. A disordered region spans residues 65 to 85 (DSETDEDEEEGDEQQRLLNTP). Position 66 is a phosphoserine (S66). Acidic residues predominate over residues 67–76 (ETDEDEEEGD). T68 bears the Phosphothreonine mark. Residues 85 to 91 (PRRKKLK) carry the Nuclear localization signal motif. Residues 108–178 (SDIKICALGE…LYRDDVLIKP (71 aa)) enclose the BTB domain.

As to quaternary structure, interacts with TMPO-beta, TSG101 and TFDP2. Interacts with EMD.

It localises to the nucleus matrix. Its function is as follows. Possible function in spermatogenesis. Enhances the degradation of MDM2 and increases the amount of p53 probably by modulating the nucleocytoplasmic transport. This is Germ cell-less protein-like 1 (GMCL1) from Homo sapiens (Human).